The sequence spans 76 residues: Large ribosomal subunit protein uL29 (76 aa).

It belongs to the universal ribosomal protein uL29 family.

The chain is Large ribosomal subunit protein uL29 from Corynebacterium diphtheriae (strain ATCC 700971 / NCTC 13129 / Biotype gravis).